A 214-amino-acid polypeptide reads, in one-letter code: Thiamine-phosphate synthase (214 aa).

4-amino-2-methyl-5-(diphosphooxymethyl)pyrimidine is bound by residues 37-41 and asparagine 73; that span reads QYREK. Aspartate 74 and aspartate 93 together coordinate Mg(2+). Residue serine 112 participates in 4-amino-2-methyl-5-(diphosphooxymethyl)pyrimidine binding. Residue 139–141 participates in 2-[(2R,5Z)-2-carboxy-4-methylthiazol-5(2H)-ylidene]ethyl phosphate binding; that stretch reads TIS. Residue lysine 142 coordinates 4-amino-2-methyl-5-(diphosphooxymethyl)pyrimidine. Residues glycine 171 and 191–192 each bind 2-[(2R,5Z)-2-carboxy-4-methylthiazol-5(2H)-ylidene]ethyl phosphate; that span reads IS.

Belongs to the thiamine-phosphate synthase family. The cofactor is Mg(2+).

It catalyses the reaction 2-[(2R,5Z)-2-carboxy-4-methylthiazol-5(2H)-ylidene]ethyl phosphate + 4-amino-2-methyl-5-(diphosphooxymethyl)pyrimidine + 2 H(+) = thiamine phosphate + CO2 + diphosphate. The catalysed reaction is 2-(2-carboxy-4-methylthiazol-5-yl)ethyl phosphate + 4-amino-2-methyl-5-(diphosphooxymethyl)pyrimidine + 2 H(+) = thiamine phosphate + CO2 + diphosphate. The enzyme catalyses 4-methyl-5-(2-phosphooxyethyl)-thiazole + 4-amino-2-methyl-5-(diphosphooxymethyl)pyrimidine + H(+) = thiamine phosphate + diphosphate. It functions in the pathway cofactor biosynthesis; thiamine diphosphate biosynthesis; thiamine phosphate from 4-amino-2-methyl-5-diphosphomethylpyrimidine and 4-methyl-5-(2-phosphoethyl)-thiazole: step 1/1. Condenses 4-methyl-5-(beta-hydroxyethyl)thiazole monophosphate (THZ-P) and 2-methyl-4-amino-5-hydroxymethyl pyrimidine pyrophosphate (HMP-PP) to form thiamine monophosphate (TMP). This is Thiamine-phosphate synthase from Listeria monocytogenes serotype 4b (strain F2365).